Here is a 504-residue protein sequence, read N- to C-terminus: L-carnitine/gamma-butyrobetaine antiporter (504 aa).

12 consecutive transmembrane segments (helical) span residues 10–30 (IEPKVFFPPLIIVGILCWLTV), 51–71 (WGWAFEWYMVVMLFGWFWLVF), 92–112 (IFMMFASCTSAAVLFWGSIEI), 143–163 (GPLPWATYSFLSVAFAYFFFV), 195–215 (FYLVALIFAMGTSLGLATPLV), 231–251 (LDAIIITCWIILNAICVACGL), 263–283 (SYLSFLMLGWVFIVSGASFIM), 316–336 (WTVFYWAWWVIYAIQMSIFLA), 347–367 (LCFGMVLGLTASTWILWTVLG), 398–418 (WAALPLSTATMWGFFILCFIA), 446–466 (LLVRIGWSILVGIIGIVLLAL), and 475–495 (AIIAGGCPLFFVNIMVTLSFI).

The protein belongs to the BCCT transporter (TC 2.A.15) family. CaiT subfamily. Homotrimer.

The protein resides in the cell inner membrane. The catalysed reaction is 4-(trimethylamino)butanoate(in) + (R)-carnitine(out) = 4-(trimethylamino)butanoate(out) + (R)-carnitine(in). It functions in the pathway amine and polyamine metabolism; carnitine metabolism. Functionally, catalyzes the exchange of L-carnitine for gamma-butyrobetaine. The sequence is that of L-carnitine/gamma-butyrobetaine antiporter from Escherichia coli (strain ATCC 8739 / DSM 1576 / NBRC 3972 / NCIMB 8545 / WDCM 00012 / Crooks).